We begin with the raw amino-acid sequence, 154 residues long: SsrA-binding protein (154 aa).

It belongs to the SmpB family.

It is found in the cytoplasm. Required for rescue of stalled ribosomes mediated by trans-translation. Binds to transfer-messenger RNA (tmRNA), required for stable association of tmRNA with ribosomes. tmRNA and SmpB together mimic tRNA shape, replacing the anticodon stem-loop with SmpB. tmRNA is encoded by the ssrA gene; the 2 termini fold to resemble tRNA(Ala) and it encodes a 'tag peptide', a short internal open reading frame. During trans-translation Ala-aminoacylated tmRNA acts like a tRNA, entering the A-site of stalled ribosomes, displacing the stalled mRNA. The ribosome then switches to translate the ORF on the tmRNA; the nascent peptide is terminated with the 'tag peptide' encoded by the tmRNA and targeted for degradation. The ribosome is freed to recommence translation, which seems to be the essential function of trans-translation. The chain is SsrA-binding protein from Acetivibrio thermocellus (strain ATCC 27405 / DSM 1237 / JCM 9322 / NBRC 103400 / NCIMB 10682 / NRRL B-4536 / VPI 7372) (Clostridium thermocellum).